We begin with the raw amino-acid sequence, 88 residues long: Cell division topological specificity factor (88 aa).

This sequence belongs to the MinE family.

In terms of biological role, prevents the cell division inhibition by proteins MinC and MinD at internal division sites while permitting inhibition at polar sites. This ensures cell division at the proper site by restricting the formation of a division septum at the midpoint of the long axis of the cell. The polypeptide is Cell division topological specificity factor (Aeromonas salmonicida (strain A449)).